The sequence spans 121 residues: MADKGSKPRKEEVVSREYTINLHKRLHGCTFKKKAPKAIKEIRKFAQKAMGTTDVRVDVKLNKHIWSRGIRSVPRRIRVRIARKRNDDEDAKEELYSLVTVAEIPEGGLKGLGTQVIDEEE.

This sequence belongs to the eukaryotic ribosomal protein eL31 family.

The polypeptide is Large ribosomal subunit protein eL31 (RPL31) (Perilla frutescens (Beefsteak mint)).